A 902-amino-acid chain; its full sequence is Translation initiation factor IF-2 (902 aa).

Basic and acidic residues-rich tracts occupy residues 1-12 (MVDTKTPGDKKL) and 43-60 (VVEK…EPHA). The segment at 1–276 (MVDTKTPGDK…KPGPQKERGR (276 aa)) is disordered. Residues 69–84 (PAAPAPSRPAPPPAPP) are compositionally biased toward pro residues. Positions 111-174 (AKLREVEERR…ETEAKKRFGE (64 aa)) are enriched in basic and acidic residues. Low complexity-rich tracts occupy residues 181 to 190 (AARPATAAPA) and 198 to 237 (APAA…AVAA). The tr-type G domain occupies 398-567 (TRSPVVTVMG…MIALQADILD (170 aa)). A G1 region spans residues 407 to 414 (GHVDHGKT). Position 407 to 414 (407 to 414 (GHVDHGKT)) interacts with GTP. Residues 432–436 (GITQH) are G2. Positions 455–458 (DTPG) are G3. Residues 455–459 (DTPGH) and 509–512 (NKID) each bind GTP. The interval 509 to 512 (NKID) is G4. A G5 region spans residues 545-547 (SAK).

It belongs to the TRAFAC class translation factor GTPase superfamily. Classic translation factor GTPase family. IF-2 subfamily.

Its subcellular location is the cytoplasm. Its function is as follows. One of the essential components for the initiation of protein synthesis. Protects formylmethionyl-tRNA from spontaneous hydrolysis and promotes its binding to the 30S ribosomal subunits. Also involved in the hydrolysis of GTP during the formation of the 70S ribosomal complex. This Bradyrhizobium diazoefficiens (strain JCM 10833 / BCRC 13528 / IAM 13628 / NBRC 14792 / USDA 110) protein is Translation initiation factor IF-2.